The following is a 139-amino-acid chain: Peptide methionine sulfoxide reductase MsrB (139 aa).

Residues 14–137 (DEEWRRELTP…NSISLDFQPE (124 aa)) enclose the MsrB domain. Zn(2+)-binding residues include Cys53, Cys56, Cys102, and Cys105. Residue Cys126 is the Nucleophile of the active site.

It belongs to the MsrB Met sulfoxide reductase family. Zn(2+) is required as a cofactor.

It catalyses the reaction L-methionyl-[protein] + [thioredoxin]-disulfide + H2O = L-methionyl-(R)-S-oxide-[protein] + [thioredoxin]-dithiol. This chain is Peptide methionine sulfoxide reductase MsrB, found in Leifsonia xyli subsp. xyli (strain CTCB07).